Consider the following 323-residue polypeptide: tRNA U34 carboxymethyltransferase (323 aa).

Carboxy-S-adenosyl-L-methionine is bound by residues Lys-91, Trp-105, Lys-110, Gly-130, 152-154 (DPT), 181-182 (IE), Met-196, Tyr-200, and Arg-315.

This sequence belongs to the class I-like SAM-binding methyltransferase superfamily. CmoB family. Homotetramer.

It carries out the reaction carboxy-S-adenosyl-L-methionine + 5-hydroxyuridine(34) in tRNA = 5-carboxymethoxyuridine(34) in tRNA + S-adenosyl-L-homocysteine + H(+). Functionally, catalyzes carboxymethyl transfer from carboxy-S-adenosyl-L-methionine (Cx-SAM) to 5-hydroxyuridine (ho5U) to form 5-carboxymethoxyuridine (cmo5U) at position 34 in tRNAs. In Escherichia coli O8 (strain IAI1), this protein is tRNA U34 carboxymethyltransferase.